We begin with the raw amino-acid sequence, 461 residues long: E3 ubiquitin-protein ligase parkin (461 aa).

Residues 30 to 90 (VNIYVKSNVG…DSTVIEVLDF (61 aa)) form the Ubiquitin-like domain. Residue serine 92 is modified to Phosphoserine. An RING-type 0; atypical zinc finger spans residues 145 to 227 (AHFFIYCANP…SQGENDTAVP (83 aa)). Zn(2+) contacts are provided by cysteine 151, cysteine 155, cysteine 167, and cysteine 170. Threonine 176 is modified (phosphothreonine). Zn(2+) contacts are provided by cysteine 197, cysteine 202, cysteine 213, histidine 216, cysteine 240, cysteine 243, cysteine 255, histidine 259, cysteine 262, cysteine 265, cysteine 291, cysteine 295, cysteine 334, cysteine 339, cysteine 354, cysteine 356, cysteine 361, cysteine 364, histidine 369, cysteine 373, cysteine 415, and cysteine 418. Residues 236 to 461 (KKIPCLACTD…RDCMASHWFG (226 aa)) are TRIAD supradomain. An RING-type 1 zinc finger spans residues 240 to 295 (CLACTDICDPVLVFSCDNRHVTCLECFKNYCGSRLKDRQFLSHPDFGYTLPCPAGC). IBR-type zinc fingers lie at residues 315–373 (EQYH…LGEC) and 411–452 (LTKP…PWER). The RING-type 2; atypical zinc finger occupies 415–446 (CPKCRTSTERAGGCMHMICTRANCGFHWCWVC). Cysteine 428 is an active-site residue. Zn(2+)-binding residues include cysteine 433, cysteine 438, cysteine 443, cysteine 446, cysteine 454, and histidine 458.

This sequence belongs to the RBR family. Parkin subfamily. As to quaternary structure, forms an E3 ubiquitin ligase complex with E2 ubiquitin-conjugating enzymes. Post-translationally, auto-ubiquitinates in an E2-dependent manner leading to its own degradation. In terms of processing, phosphorylated. Activation requires phosphorylation at Ser-92 by Pink1 and binding to Pink1-phosphorylated polyubiquitin chains. Phosphorylation at Thr-176 by Pink1 is also important for mitochondrial localization.

The protein localises to the mitochondrion. Its subcellular location is the cytoplasm. The protein resides in the cytosol. It catalyses the reaction [E2 ubiquitin-conjugating enzyme]-S-ubiquitinyl-L-cysteine + [acceptor protein]-L-lysine = [E2 ubiquitin-conjugating enzyme]-L-cysteine + [acceptor protein]-N(6)-ubiquitinyl-L-lysine.. The protein operates within protein modification; protein ubiquitination. With respect to regulation, in the autoinhibited state the side chain of Phe-460 inserts into a hydrophobic groove in RING-0, occluding the ubiquitin acceptor site Cys-428, whereas the REP repressor element binds RING-1 and blocks its E2-binding site. Activation of park requires 2 steps: (1) phosphorylation at Ser-92 by Pink1 and (2) binding to phosphorylated ubiquitin, leading to unlock repression of the catalytic Cys-428 by the RING-0 region via an allosteric mechanism and converting park to its fully-active form. According to another report, phosphorylation at Ser-92 by Pink1 is not essential for activation and only binding to phosphorylated ubiquitin is essential to unlock repression. Functionally, E3 ubiquitin-protein ligase which accepts ubiquitin from E2 ubiquitin-conjugating enzymes in the form of a thioester and then directly transfers the ubiquitin to targeted substrates, such as Marf, Opa1, Sep1, Tom20 and porin. Mediates monoubiquitination as well as 'Lys-6', 'Lys-11', 'Lys-48'-linked and 'Lys-63'-linked polyubiquitination of substrates, depending on the context. Protects against mitochondrial dysfunction during cellular stress, by acting downstream of Pink1, to coordinate mitochondrial quality control mechanisms that remove and replace dysfunctional mitochondrial components. Depending on the severity of mitochondrial damage and/or dysfunction, activity ranges from preventing apoptosis and stimulating mitochondrial biogenesis to regulating mitochondrial dynamics and eliminating severely damaged mitochondria via mitophagy. Appears to be particularly important in maintaining the physiology and function of cells with high energy demands that are undergoing stress or altered metabolic environment, including spermatids, muscle cells and neurons such as the dopaminergic (DA) neurons. Activation and recruitment onto the outer membrane of damaged/dysfunctional mitochondria (OMM) requires Pink1-mediated phosphorylation of both park and ubiquitin. In depolarized mitochondria, mediates the decision between mitophagy or preventing apoptosis by inducing either the poly- or monoubiquitination of porin/VDAC; polyubiquitination of porin promotes mitophagy, while monoubiquitination of porin decreases mitochondrial calcium influx which ultimately inhibits apoptosis. When cellular stress results in irreversible mitochondrial damage, promotes the autophagic degradation of dysfunctional depolarized mitochondria (mitophagy) by promoting the ubiquitination of mitochondrial proteins. Preferentially assembles 'Lys-6'-, 'Lys-11'- and 'Lys-63'-linked polyubiquitin chains following mitochondrial damage, leading to mitophagy. In developing tissues, inhibits JNK-mediated apoptosis by negatively regulating bsk transcription. The Pink1-park pathway also promotes fission and/or inhibits fusion of damaged mitochondria by mediating the ubiquitination and subsequent degradation of proteins involved in mitochondrial fusion/fission such as Marf and Opa1. This prevents the refusion of unhealthy mitochondria with the healthy mitochondrial network and/or initiates mitochondrial fragmentation facilitating their later engulfment by autophagosomes. Regulates motility of damaged mitochondria by phosphorylating Miro which likely promotes its park-dependent degradation by the proteasome; in motor neurons, this inhibits mitochondrial intracellular anterograde transport along the axons which probably increases the chance of the mitochondria being eliminated in the soma. The Pink1-park pathway is also involved in mitochondrial regeneration processes such as promoting mitochondrial biogenesis, activating localized mitochondrial repair, promoting selective turnover of mitochondrial proteins and initiating the mitochondrial import of endogenous proteins. Involved in mitochondrial biogenesis via the ubiquitination of transcriptional repressor Paris which leads to its subsequent proteasomal degradation and allows activation of the transcription factor srl. Promotes localized mitochondrial repair by activating the translation of specific nuclear-encoded mitochondrial RNAs (nc-mtRNAs) on the mitochondrial surface, including several key electron transport chain component nc-mtRNAs. The chain is E3 ubiquitin-protein ligase parkin from Pediculus humanus subsp. corporis (Body louse).